A 90-amino-acid chain; its full sequence is Probable Fe(2+)-trafficking protein (90 aa).

The protein belongs to the Fe(2+)-trafficking protein family.

Could be a mediator in iron transactions between iron acquisition and iron-requiring processes, such as synthesis and/or repair of Fe-S clusters in biosynthetic enzymes. The chain is Probable Fe(2+)-trafficking protein from Pseudomonas aeruginosa (strain UCBPP-PA14).